Here is a 511-residue protein sequence, read N- to C-terminus: Glutamyl-tRNA(Gln) amidotransferase subunit A, mitochondrial (511 aa).

Catalysis depends on charge relay system residues K72 and S149. S173 (acyl-ester intermediate) is an active-site residue.

This sequence belongs to the amidase family. GatA subfamily. In terms of assembly, subunit of the heterotrimeric GatCAB amidotransferase (AdT) complex, composed of A, B and C subunits.

It localises to the mitochondrion. The enzyme catalyses L-glutamyl-tRNA(Gln) + L-glutamine + ATP + H2O = L-glutaminyl-tRNA(Gln) + L-glutamate + ADP + phosphate + H(+). Its function is as follows. Allows the formation of correctly charged Gln-tRNA(Gln) through the transamidation of misacylated Glu-tRNA(Gln) in the mitochondria. The reaction takes place in the presence of glutamine and ATP through an activated gamma-phospho-Glu-tRNA(Gln). The protein is Glutamyl-tRNA(Gln) amidotransferase subunit A, mitochondrial of Fusarium vanettenii (strain ATCC MYA-4622 / CBS 123669 / FGSC 9596 / NRRL 45880 / 77-13-4) (Fusarium solani subsp. pisi).